An 821-amino-acid polypeptide reads, in one-letter code: Integrator complex assembly factor BRAT1 (821 aa).

The interval Pro100–Asp200 is required for interaction with NDFIP1. HEAT repeat units follow at residues Pro495 to Trp531 and Ser544 to Gly576. The disordered stretch occupies residues Gly741 to Gln767. Ser742 is subject to Phosphoserine. The BRAT1-like motif motif lies at Asp819 to Tyr821. Zn(2+) is bound at residue Cys820.

Belongs to the BRAT1 family. Part of the multiprotein complex composed of BRAT1, WDR73, as well as integrator complex subunits INTS9 and INTS11. Interacts with BRCA1 and ATM. Interacts with MTOR and RPTOR. Interacts with NDFIP1. Interacts with SMC1A and PRKDC. Post-translationally, ubiquitinated by NEDD4, NEDD4L and ITCH; mono- and polyubiquitinated forms are detected. Ubiquitously expressed.

It is found in the nucleus. Its subcellular location is the cytoplasm. Its function is as follows. Component of a multiprotein complex required for the assembly of the RNA endonuclease module of the integrator complex. Associates with INTS9 and INTS11 in the cytoplasm and blocks the active site of INTS11 to inhibit the endonuclease activity of INTS11 before formation of the full integrator complex. Following dissociation of WDR73 of the complex, BRAT1 facilitates the nuclear import of the INTS9-INTS11 heterodimer. In the nucleus, INTS4 is integrated to the INTS9-INTS11 heterodimer and BRAT1 is released from the mature RNA endonuclease module by inositol hexakisphosphate (InsP6). BRAT1 is also involved in DNA damage response; activates kinases ATM, SMC1A and PRKDC by modulating their phosphorylation status following ionizing radiation (IR) stress. Plays a role in regulating mitochondrial function and cell proliferation. Required for protein stability of MTOR and MTOR-related proteins, and cell cycle progress by growth factors. The chain is Integrator complex assembly factor BRAT1 from Homo sapiens (Human).